Here is a 229-residue protein sequence, read N- to C-terminus: ADP-ribosylation factor-like protein 6-interacting protein 4 (229 aa).

Residues 1–20 show a composition bias toward basic residues; sequence MAHVGSRKRSRSRSRSRSGR. Residues 1–152 are disordered; sequence MAHVGSRKRS…EDNDGPVLTD (152 aa). Residues 21–35 show a composition bias toward basic and acidic residues; it reads RGSEKRSKRSSKDAS. Residues 66-87 are compositionally biased toward low complexity; that stretch reads SRSSSTSSSSSSSSSASSSSSS. A compositionally biased stretch (basic residues) spans 90–117; sequence RKKRAKHKEKKRKKKKKKRKKKLKKRVK. A phosphoserine mark is found at Ser140 and Ser174. Residue Lys191 forms a Glycyl lysine isopeptide (Lys-Gly) (interchain with G-Cter in SUMO2) linkage.

It belongs to the ARL6IP4 family. As to quaternary structure, interacts with ZCCHC17. Interacts with SRSF2. Interacts with ARL6. As to expression, widely expressed. Expressed at high level in testis and thymus.

It is found in the nucleus. It localises to the nucleolus. The protein localises to the nucleus speckle. In terms of biological role, involved in modulating alternative pre-mRNA splicing with either 5' distal site activation or preferential use of 3' proximal site. The protein is ADP-ribosylation factor-like protein 6-interacting protein 4 (Arl6ip4) of Mus musculus (Mouse).